A 574-amino-acid polypeptide reads, in one-letter code: Phenylalanine--tRNA ligase beta subunit (574 aa).

Residues 278–353 form the B5 domain; the sequence is LTPKEFEVEL…IAYGYNEIEP (76 aa). The Mg(2+) site is built by Asp-331, Asp-337, Glu-340, and Asp-341.

Belongs to the phenylalanyl-tRNA synthetase beta subunit family. Type 2 subfamily. Tetramer of two alpha and two beta subunits. The cofactor is Mg(2+).

It localises to the cytoplasm. It carries out the reaction tRNA(Phe) + L-phenylalanine + ATP = L-phenylalanyl-tRNA(Phe) + AMP + diphosphate + H(+). The sequence is that of Phenylalanine--tRNA ligase beta subunit from Thermococcus kodakarensis (strain ATCC BAA-918 / JCM 12380 / KOD1) (Pyrococcus kodakaraensis (strain KOD1)).